A 202-amino-acid polypeptide reads, in one-letter code: Ribosome maturation factor RimP (202 aa).

The protein belongs to the RimP family.

It is found in the cytoplasm. Required for maturation of 30S ribosomal subunits. The protein is Ribosome maturation factor RimP of Paracidovorax citrulli (strain AAC00-1) (Acidovorax citrulli).